Reading from the N-terminus, the 407-residue chain is L-cysteine:1D-myo-inositol 2-amino-2-deoxy-alpha-D-glucopyranoside ligase (407 aa).

The disordered stretch occupies residues 1-22 (MRSWSAPDIVPLPGTGGPLRVH). Zn(2+) is bound at residue C43. L-cysteinyl-5'-AMP contacts are provided by residues 43–46 (CGIT), T58, and 81–83 (NTT). Residues 45-55 (ITPYDAAHLGH) carry the 'HIGH' region motif. The short motif at 183 to 188 (ERGGDP) is the 'ERGGDP' region element. W223 provides a ligand contact to L-cysteinyl-5'-AMP. Residue C227 participates in Zn(2+) binding. L-cysteinyl-5'-AMP is bound at residue 245–247 (GSD). Residue H252 coordinates Zn(2+). Residue V278 participates in L-cysteinyl-5'-AMP binding. Positions 284–288 (KMSKS) match the 'KMSKS' region motif.

The protein belongs to the class-I aminoacyl-tRNA synthetase family. MshC subfamily. Monomer. It depends on Zn(2+) as a cofactor.

The enzyme catalyses 1D-myo-inositol 2-amino-2-deoxy-alpha-D-glucopyranoside + L-cysteine + ATP = 1D-myo-inositol 2-(L-cysteinylamino)-2-deoxy-alpha-D-glucopyranoside + AMP + diphosphate + H(+). Its function is as follows. Catalyzes the ATP-dependent condensation of GlcN-Ins and L-cysteine to form L-Cys-GlcN-Ins. The protein is L-cysteine:1D-myo-inositol 2-amino-2-deoxy-alpha-D-glucopyranoside ligase of Nocardiopsis dassonvillei (strain ATCC 23218 / DSM 43111 / CIP 107115 / JCM 7437 / KCTC 9190 / NBRC 14626 / NCTC 10488 / NRRL B-5397 / IMRU 509) (Actinomadura dassonvillei).